Consider the following 89-residue polypeptide: Co-chaperonin GroES (89 aa).

The protein belongs to the GroES chaperonin family. Heptamer of 7 subunits arranged in a ring. Interacts with the chaperonin GroEL.

The protein localises to the cytoplasm. In terms of biological role, together with the chaperonin GroEL, plays an essential role in assisting protein folding. The GroEL-GroES system forms a nano-cage that allows encapsulation of the non-native substrate proteins and provides a physical environment optimized to promote and accelerate protein folding. GroES binds to the apical surface of the GroEL ring, thereby capping the opening of the GroEL channel. This is Co-chaperonin GroES from Petrotoga mobilis (strain DSM 10674 / SJ95).